The following is a 310-amino-acid chain: Vomeronasal type-1 receptor 97 (310 aa).

Over 1 to 19 (MNKDNILHTDTNIKITLFS) the chain is Extracellular. A helical membrane pass occupies residues 20-40 (EVSIGISANSALFFSHLFMLF). Topologically, residues 41–49 (EKNRSKPID) are cytoplasmic. The helical transmembrane segment at 50 to 70 (LYIAFLSLTQLMLLITIGLIA) threads the bilayer. The Extracellular portion of the chain corresponds to 71-93 (ADMFMSRGRWDSTTCQSLIYLHR). Cys85 and Cys172 are oxidised to a cystine. A helical transmembrane segment spans residues 94-114 (LLRGFTLCATCLLNVLWTITL). The Cytoplasmic segment spans residues 115 to 131 (SPRSSCLTTFKHKSPHH). Residues 132–152 (ISGAFLFFCVLYISFGSHLFL) form a helical membrane-spanning segment. The Extracellular portion of the chain corresponds to 153 to 190 (STIATPNLTSDNFMYVTQSCSFLPMSYSRTSMFSTPMA). N-linked (GlcNAc...) asparagine glycosylation occurs at Asn159. A helical transmembrane segment spans residues 191 to 211 (IREALLIGLIGLSSGYMVAFL). Residues 212–238 (WRHKNQARHLHSTSLSSKVSPEQRATR) lie on the Cytoplasmic side of the membrane. Residues 239 to 259 (TIMILMSFFVVLYILENVVFY) form a helical membrane-spanning segment. At 260–269 (SRMTFKDGSM) the chain is on the extracellular side. Residues 270–290 (FYCVQIIVSHSYATISPFVFI) form a helical membrane-spanning segment. Residues 291 to 310 (CTEKRIIKLWGSMSSRIVSI) lie on the Cytoplasmic side of the membrane.

This sequence belongs to the G-protein coupled receptor 1 family. Expressed in 1-4% of neurons of the vomeronasal organ. Only one pheromone receptor gene may be expressed in a particular neuron. Not expressed in the main olfactory epithelium.

The protein resides in the cell membrane. Functionally, putative pheromone receptor implicated in the regulation of social as well as reproductive behavior. This is Vomeronasal type-1 receptor 97 (Vom1r97) from Rattus norvegicus (Rat).